Reading from the N-terminus, the 385-residue chain is 26S proteasome non-ATPase regulatory subunit 13 (385 aa).

The 172-residue stretch at 176–347 (EFYKNALMYL…EIIHITWVTP (172 aa)) folds into the PCI domain.

This sequence belongs to the proteasome subunit S11 family.

Acts as a regulatory subunit of the 26S proteasome which is involved in the ATP-dependent degradation of ubiquitinated proteins. This chain is 26S proteasome non-ATPase regulatory subunit 13 (psmD13), found in Dictyostelium discoideum (Social amoeba).